The chain runs to 186 residues: Ribonuclease M5 (186 aa).

A Toprim domain is found at 4–94 (KEIIVVEGRD…AKPKNKRGIG (91 aa)). Mg(2+)-binding residues include Glu-10, Asp-56, and Asp-58.

The protein belongs to the ribonuclease M5 family. In terms of assembly, requires ribosomal protein L18 (rplR) for catalysis; it can be replaced by 30% dimethylsulfoxide suggesting L18 functions as an rRNA folding chaperone. Mg(2+) serves as cofactor. Mn(2+) is required as a cofactor. The cofactor is Ca(2+).

The protein localises to the cytoplasm. It carries out the reaction Endonucleolytic cleavage of RNA, removing 21 and 42 nucleotides, respectively, from the 5'- and 3'-termini of a 5S-rRNA precursor.. Its function is as follows. Required for correct processing of both the 5' and 3' ends of 5S rRNA precursor. Cleaves both sides of a double-stranded region yielding mature 5S rRNA in one step. Releases 5'-phosphoryl and 3'-hydroxy termini. This is Ribonuclease M5 from Bacillus subtilis (strain 168).